Here is a 236-residue protein sequence, read N- to C-terminus: Small ribosomal subunit protein uS2c (236 aa).

It belongs to the universal ribosomal protein uS2 family.

It is found in the plastid. This is Small ribosomal subunit protein uS2c (rps2) from Cuscuta exaltata (Tall dodder).